Here is a 427-residue protein sequence, read N- to C-terminus: Trigger factor (427 aa).

The 86-residue stretch at 163 to 248 folds into the PPIase FKBP-type domain; the sequence is GDTVVIDFVG…IHEVKTKEVP (86 aa).

It belongs to the FKBP-type PPIase family. Tig subfamily.

The protein resides in the cytoplasm. The catalysed reaction is [protein]-peptidylproline (omega=180) = [protein]-peptidylproline (omega=0). In terms of biological role, involved in protein export. Acts as a chaperone by maintaining the newly synthesized protein in an open conformation. Functions as a peptidyl-prolyl cis-trans isomerase. The protein is Trigger factor of Streptococcus agalactiae serotype Ia (strain ATCC 27591 / A909 / CDC SS700).